Reading from the N-terminus, the 315-residue chain is Homeobox-leucine zipper protein HAT3 (315 aa).

Residues 140–163 (SCSLGGGSDDEDGSGNGDDSSRKK) are disordered. The segment at residues 159-218 (SSRKKLRLSKEQALVLEETFKEHSTLNPKQKMALAKQLNLRTRQVEVWFQNRRARTKLKQ) is a DNA-binding region (homeobox). Residues 226-247 (LKRCCENLTDENRRLQKEVSEL) are leucine-zipper. Positions 280–305 (SSSSVAPPVMNSSSPMGPMSPWAAMP) are enriched in low complexity. The disordered stretch occupies residues 280 to 315 (SSSSVAPPVMNSSSPMGPMSPWAAMPLRQRPAAGSH).

It belongs to the HD-ZIP homeobox family. Class II subfamily.

Its subcellular location is the nucleus. In terms of biological role, probable transcription factor. In Arabidopsis thaliana (Mouse-ear cress), this protein is Homeobox-leucine zipper protein HAT3 (HAT3).